The primary structure comprises 88 residues: MAEAQKTVRTLTGRVVSDKMDKTITVLIERRVKHPIYGKYVKRSTKLHAHDETNQCRIGDTVTIRETRPLAKTKSWMLVEVVERAVEV.

Belongs to the universal ribosomal protein uS17 family. As to quaternary structure, part of the 30S ribosomal subunit.

Functionally, one of the primary rRNA binding proteins, it binds specifically to the 5'-end of 16S ribosomal RNA. The sequence is that of Small ribosomal subunit protein uS17 from Azotobacter vinelandii (strain DJ / ATCC BAA-1303).